Here is a 398-residue protein sequence, read N- to C-terminus: Delta-aminolevulinic acid dehydratase, chloroplastic (398 aa).

Residues 48–87 (VPEAPPVPPTPASPAGTPVVPSLPIQRRPRRNRRSPALRS) form a disordered region. Positions 50 to 59 (EAPPVPPTPA) are enriched in pro residues. Over residues 60-69 (SPAGTPVVPS) the composition is skewed to low complexity. Basic residues predominate over residues 74 to 83 (RRPRRNRRSP). The active-site Schiff-base intermediate with substrate is Lys-266. The 5-aminolevulinate site is built by Arg-276 and Lys-288. A Mg(2+)-binding site is contributed by Glu-304. Residue Lys-319 is the Schiff-base intermediate with substrate of the active site. 2 residues coordinate 5-aminolevulinate: Ser-345 and Tyr-384.

Belongs to the ALAD family. Homooctamer; formed by oligomerization of dimers. Probably also forms lower oligomers. Requires Mg(2+) as cofactor.

The protein localises to the plastid. The protein resides in the chloroplast. The enzyme catalyses 2 5-aminolevulinate = porphobilinogen + 2 H2O + H(+). It functions in the pathway porphyrin-containing compound metabolism; protoporphyrin-IX biosynthesis; coproporphyrinogen-III from 5-aminolevulinate: step 1/4. Activated by magnesium. Inhibited by succinyl acetone. Enzyme activity may depend on the oligomerization state, where the fully active octamer may dissociate and reassemble into less active lower oligomers. Functionally, catalyzes an early step in the biosynthesis of tetrapyrroles. Binds two molecules of 5-aminolevulinate per subunit, each at a distinct site, and catalyzes their condensation to form porphobilinogen. In Pisum sativum (Garden pea), this protein is Delta-aminolevulinic acid dehydratase, chloroplastic (HEMB).